The following is a 514-amino-acid chain: 2,3-bisphosphoglycerate-independent phosphoglycerate mutase (514 aa).

Mn(2+) contacts are provided by aspartate 14 and serine 64. The active-site Phosphoserine intermediate is the serine 64. Residues histidine 125, 155-156, arginine 187, arginine 193, 263-266, and lysine 336 each bind substrate; these read RD and RADR. Residues aspartate 403, histidine 407, aspartate 444, histidine 445, and histidine 463 each contribute to the Mn(2+) site.

The protein belongs to the BPG-independent phosphoglycerate mutase family. Monomer. The cofactor is Mn(2+).

The catalysed reaction is (2R)-2-phosphoglycerate = (2R)-3-phosphoglycerate. It participates in carbohydrate degradation; glycolysis; pyruvate from D-glyceraldehyde 3-phosphate: step 3/5. Its function is as follows. Catalyzes the interconversion of 2-phosphoglycerate and 3-phosphoglycerate. In Escherichia coli O1:K1 / APEC, this protein is 2,3-bisphosphoglycerate-independent phosphoglycerate mutase.